The primary structure comprises 1262 residues: Isoleucine--tRNA ligase, cytoplasmic (1262 aa).

Met1 is modified (N-acetylmethionine). The 'HIGH' region motif lies at 48-58 (PFATGLPHYGH). The short motif at 600–604 (KMSKR) is the 'KMSKS' region element. Lys603 lines the ATP pocket. Position 1049 is a phosphoserine (Ser1049). Thr1058 bears the Phosphothreonine mark.

This sequence belongs to the class-I aminoacyl-tRNA synthetase family. Part of a multisubunit complex that groups tRNA ligases for Arg (RARS1), Asp (DARS1), Gln (QARS1), Ile (IARS1), Leu (LARS1), Lys (KARS1), Met (MARS1) the bifunctional ligase for Glu and Pro (EPRS1) and the auxiliary subunits AIMP1/p43, AIMP2/p38 and EEF1E1/p18.

The protein localises to the cytoplasm. Its subcellular location is the cytosol. It catalyses the reaction tRNA(Ile) + L-isoleucine + ATP = L-isoleucyl-tRNA(Ile) + AMP + diphosphate. Functionally, catalyzes the specific attachment of an amino acid to its cognate tRNA in a 2 step reaction: the amino acid (AA) is first activated by ATP to form AA-AMP and then transferred to the acceptor end of the tRNA. The protein is Isoleucine--tRNA ligase, cytoplasmic (Iars1) of Mus musculus (Mouse).